We begin with the raw amino-acid sequence, 1396 residues long: G2/mitotic-specific cyclin-B3 (1396 aa).

Disordered regions lie at residues 1–64 (MPPP…TNAS), 259–398 (KEKP…PQME), and 477–500 (TTEK…PGEL). The span at 10–34 (SKLETEKAQSNKITPREEQQSEKIG) shows a compositional bias: basic and acidic residues. A D-box motif is present at residues 54–62 (RSVFEDVTN). Residues 264-273 (VKKPHFRKKK) show a composition bias toward basic residues. The segment covering 306-315 (LQENTNNKDA) has biased composition (polar residues). A Phosphoserine modification is found at Ser-703. The interval 775 to 796 (VDEPLSHQSPHIQNHSDTTKEA) is disordered. Residues 780 to 790 (SHQSPHIQNHS) are compositionally biased toward polar residues.

It belongs to the cyclin family. Cyclin AB subfamily. In terms of assembly, interacts with CDK2 kinase. In terms of processing, ubiquitinated. Ubiquitination leads to its degradation during anaphase entry, after degradation of CCNB1. Expressed in testis. Also expressed in the fetal ovary, but not in the adult.

It is found in the nucleus. In terms of biological role, cyclins are positive regulatory subunits of the cyclin-dependent kinases (CDKs), and thereby play an essential role in the control of the cell cycle, notably via their destruction during cell division. Its tissue specificity suggest that it may be required during early meiotic prophase I. This Mus musculus (Mouse) protein is G2/mitotic-specific cyclin-B3 (Ccnb3).